We begin with the raw amino-acid sequence, 296 residues long: Putative fatty acid elongase DDB_G0272012 (296 aa).

A run of 7 helical transmembrane segments spans residues 51–71, 83–103, 134–154, 159–179, 184–204, 220–240, and 253–273; these read FQIL…IKFL, VSIL…VGIL, WSYI…IIVL, LIFL…YFMY, LQLW…YFYF, MIQI…SAAI, and AFIS…QFFV. Over residues 277–290 the composition is skewed to low complexity; that stretch reads SNKPTSSSSTTTPT. Positions 277–296 are disordered; it reads SNKPTSSSSTTTPTKTKKID.

This sequence belongs to the ELO family.

The protein resides in the membrane. The enzyme catalyses a very-long-chain acyl-CoA + malonyl-CoA + H(+) = a very-long-chain 3-oxoacyl-CoA + CO2 + CoA. In terms of biological role, could be implicated in synthesis of very long chain fatty acids. The protein is Putative fatty acid elongase DDB_G0272012 of Dictyostelium discoideum (Social amoeba).